We begin with the raw amino-acid sequence, 152 residues long: Protein SprT-like (152 aa).

The region spanning glutamine 7 to isoleucine 148 is the SprT-like domain. Zn(2+) is bound at residue histidine 67. The active site involves glutamate 68. Histidine 71 contributes to the Zn(2+) binding site.

It belongs to the SprT family. The cofactor is Zn(2+).

The protein localises to the cytoplasm. This is Protein SprT-like from Bacillus cereus (strain ATCC 10987 / NRS 248).